The sequence spans 608 residues: ATP-citrate synthase beta chain protein 2 (608 aa).

ATP-binding positions include 214–234 (ILRFNNIPQIKMMVVLGELGG) and 265–291 (FKSEVQFGHAGAKSGGEMESAQAKNQA). Glutamate 231 contacts Mg(2+). Catalysis depends on histidine 273, which acts as the Tele-phosphohistidine intermediate. 292 to 302 (LIDAGAIVPTS) is a binding site for CoA.

The protein belongs to the succinate/malate CoA ligase alpha subunit family. In terms of assembly, heterooctamer of 4 alpha and 4 beta chains. As to expression, expressed in trichomes, epidermal leaf cells, anther tapetal cells, stigma and in young vascular bundles of expanding leaves, cotyledons, roots, pedicel of flowers and siliques.

It is found in the cytoplasm. The protein resides in the cytosol. It carries out the reaction oxaloacetate + acetyl-CoA + ADP + phosphate = citrate + ATP + CoA. In terms of biological role, ATP citrate-lyase is the primary enzyme responsible for the synthesis of cytosolic acetyl-CoA, used for the elongation of fatty acids and biosynthesis of isoprenoids, flavonoids and malonated derivatives. May supply substrate to the cytosolic acetyl-CoA carboxylase, which generates the malonyl-CoA used for the synthesis of a multitude of compounds, including very long chain fatty acids and flavonoids. Required for normal growth and development and elongation of C18 fatty acids to C20 to C24 fatty acids in seeds. n contrast to all known animal ACL enzymes having a homomeric structure, plant ACLs are composed of alpha and beta chains. The protein is ATP-citrate synthase beta chain protein 2 of Arabidopsis thaliana (Mouse-ear cress).